A 147-amino-acid polypeptide reads, in one-letter code: 3-dehydroquinate dehydratase (147 aa).

The Proton acceptor role is filled by Tyr-22. Residues Asn-76, His-82, and Asp-89 each coordinate substrate. His-102 (proton donor) is an active-site residue. Residues 103–104 (IS) and Arg-113 contribute to the substrate site.

The protein belongs to the type-II 3-dehydroquinase family. In terms of assembly, homododecamer.

It catalyses the reaction 3-dehydroquinate = 3-dehydroshikimate + H2O. It participates in metabolic intermediate biosynthesis; chorismate biosynthesis; chorismate from D-erythrose 4-phosphate and phosphoenolpyruvate: step 3/7. Catalyzes a trans-dehydration via an enolate intermediate. The polypeptide is 3-dehydroquinate dehydratase (Fusobacterium nucleatum subsp. nucleatum (strain ATCC 25586 / DSM 15643 / BCRC 10681 / CIP 101130 / JCM 8532 / KCTC 2640 / LMG 13131 / VPI 4355)).